The following is a 213-amino-acid chain: MNIMLLGAPGCGKGTQAEQLVNKLNFIQVSTGDLMRKEISLNTTLGLKCQEYMNAGKYVPDQIVNQIVNQFLQYNNDKLIFDGYPRTLEQAKSLEKMLDLYNKKIDYVFYIDVNEQILIKRITNRLVCPLCKASFNLETRKPKQEGLCDFDNTKLVKRSDDSLDKVKIRLQTYKEQTLPLIDYFKTNSKFIEIKADNLSAEQVFNQIKGELKI.

Residue 10–15 (GCGKGT) coordinates ATP. The NMP stretch occupies residues 30–59 (STGDLMRKEISLNTTLGLKCQEYMNAGKYV). AMP is bound by residues Thr31, Arg36, 57 to 59 (KYV), 83 to 86 (GYPR), and Gln90. Residues 124–161 (NRLVCPLCKASFNLETRKPKQEGLCDFDNTKLVKRSDD) form an LID region. Position 125 (Arg125) interacts with ATP. 2 residues coordinate Zn(2+): Cys128 and Cys131. 134–135 (SF) provides a ligand contact to ATP. Zn(2+) is bound by residues Cys148 and Asp151. AMP-binding residues include Arg158 and Arg169. Asn197 is an ATP binding site.

This sequence belongs to the adenylate kinase family. As to quaternary structure, monomer.

The protein localises to the cytoplasm. It carries out the reaction AMP + ATP = 2 ADP. It functions in the pathway purine metabolism; AMP biosynthesis via salvage pathway; AMP from ADP: step 1/1. Its function is as follows. Catalyzes the reversible transfer of the terminal phosphate group between ATP and AMP. Plays an important role in cellular energy homeostasis and in adenine nucleotide metabolism. This Mycoplasma capricolum subsp. capricolum (strain California kid / ATCC 27343 / NCTC 10154) protein is Adenylate kinase.